The chain runs to 168 residues: Large ribosomal subunit protein uL11 (168 aa).

The protein belongs to the universal ribosomal protein uL11 family. As to quaternary structure, part of the ribosomal stalk of the 50S ribosomal subunit. Interacts with L10 and the large rRNA to form the base of the stalk. L10 forms an elongated spine to which L12 dimers bind in a sequential fashion forming a multimeric L10(L12)X complex.

Its function is as follows. Forms part of the ribosomal stalk which helps the ribosome interact with GTP-bound translation factors. The protein is Large ribosomal subunit protein uL11 of Metallosphaera sedula (strain ATCC 51363 / DSM 5348 / JCM 9185 / NBRC 15509 / TH2).